Reading from the N-terminus, the 276-residue chain is Large ribosomal subunit protein uL2 (276 aa).

The segment at 224–276 (VMNPVDHPHGGGEGKAPIGRKSPMTPWGKPTLGYKTRKKKNKSDKFIIRRRKK) is disordered. The span at 258–276 (KTRKKKNKSDKFIIRRRKK) shows a compositional bias: basic residues.

This sequence belongs to the universal ribosomal protein uL2 family. Part of the 50S ribosomal subunit. Forms a bridge to the 30S subunit in the 70S ribosome.

In terms of biological role, one of the primary rRNA binding proteins. Required for association of the 30S and 50S subunits to form the 70S ribosome, for tRNA binding and peptide bond formation. It has been suggested to have peptidyltransferase activity; this is somewhat controversial. Makes several contacts with the 16S rRNA in the 70S ribosome. In Geobacillus stearothermophilus (Bacillus stearothermophilus), this protein is Large ribosomal subunit protein uL2.